The following is a 214-amino-acid chain: MNYPHPIIAREGWPFIAIAAVIALLIHAVGGFGFAWPFWLLLVFVVQFFRDPQRPIPAQPNAVLCPADGRIVAVETTQDPYANREALKISVFMNVFNVHSQRSPVDGAVTKVEYFPGAFLNAAIDKASTENERNALVIQTASGKTVTAVQIAGLVARRILCYVRAGEPLSRGQRYGFIRFGSRVDVYLPLGSRAKVSIGEKVYASSTILAELEQ.

Ser-182 functions as the Schiff-base intermediate with substrate; via pyruvic acid in the catalytic mechanism. Residue Ser-182 is modified to Pyruvic acid (Ser); by autocatalysis.

Belongs to the phosphatidylserine decarboxylase family. PSD-A subfamily. In terms of assembly, heterodimer of a large membrane-associated beta subunit and a small pyruvoyl-containing alpha subunit. The cofactor is pyruvate. Is synthesized initially as an inactive proenzyme. Formation of the active enzyme involves a self-maturation process in which the active site pyruvoyl group is generated from an internal serine residue via an autocatalytic post-translational modification. Two non-identical subunits are generated from the proenzyme in this reaction, and the pyruvate is formed at the N-terminus of the alpha chain, which is derived from the carboxyl end of the proenzyme. The post-translation cleavage follows an unusual pathway, termed non-hydrolytic serinolysis, in which the side chain hydroxyl group of the serine supplies its oxygen atom to form the C-terminus of the beta chain, while the remainder of the serine residue undergoes an oxidative deamination to produce ammonia and the pyruvoyl prosthetic group on the alpha chain.

Its subcellular location is the cell membrane. It catalyses the reaction a 1,2-diacyl-sn-glycero-3-phospho-L-serine + H(+) = a 1,2-diacyl-sn-glycero-3-phosphoethanolamine + CO2. Its pathway is phospholipid metabolism; phosphatidylethanolamine biosynthesis; phosphatidylethanolamine from CDP-diacylglycerol: step 2/2. In terms of biological role, catalyzes the formation of phosphatidylethanolamine (PtdEtn) from phosphatidylserine (PtdSer). This is Phosphatidylserine decarboxylase proenzyme from Burkholderia ambifaria (strain MC40-6).